The following is a 766-amino-acid chain: DNA ligase (766 aa).

The tract at residues 1-30 (MSTVNAKGAKPATDANGQSLNPEEPSEALR) is disordered. Residues 57–61 (DAEYD), 106–107 (SL), and E141 contribute to the NAD(+) site. The active-site N6-AMP-lysine intermediate is K143. Positions 164, 201, 317, and 341 each coordinate NAD(+). 4 residues coordinate Zn(2+): C435, C438, C454, and C460. The BRCT domain occupies 669 to 758 (STPRTLEGVT…PEAFGDRADA (90 aa)). The tract at residues 747-766 (QGPEAFGDRADAADQPAAGE) is disordered.

This sequence belongs to the NAD-dependent DNA ligase family. LigA subfamily. Mg(2+) is required as a cofactor. The cofactor is Mn(2+).

It carries out the reaction NAD(+) + (deoxyribonucleotide)n-3'-hydroxyl + 5'-phospho-(deoxyribonucleotide)m = (deoxyribonucleotide)n+m + AMP + beta-nicotinamide D-nucleotide.. Functionally, DNA ligase that catalyzes the formation of phosphodiester linkages between 5'-phosphoryl and 3'-hydroxyl groups in double-stranded DNA using NAD as a coenzyme and as the energy source for the reaction. It is essential for DNA replication and repair of damaged DNA. In Kocuria rhizophila (strain ATCC 9341 / DSM 348 / NBRC 103217 / DC2201), this protein is DNA ligase.